Consider the following 521-residue polypeptide: GMP synthase [glutamine-hydrolyzing] (521 aa).

The 196-residue stretch at 8-203 folds into the Glutamine amidotransferase type-1 domain; that stretch reads KILILDFGAQ…VVDICGCQTL (196 aa). Residue C85 is the Nucleophile of the active site. Catalysis depends on residues H177 and E179. Positions 204–396 constitute a GMPS ATP-PPase domain; the sequence is WTAANIIDDQ…LGLPRTMVYR (193 aa). 231 to 237 is a binding site for ATP; sequence SGGVDSS.

Homodimer.

The catalysed reaction is XMP + L-glutamine + ATP + H2O = GMP + L-glutamate + AMP + diphosphate + 2 H(+). Its pathway is purine metabolism; GMP biosynthesis; GMP from XMP (L-Gln route): step 1/1. Functionally, catalyzes the synthesis of GMP from XMP. In Xanthomonas oryzae pv. oryzae (strain MAFF 311018), this protein is GMP synthase [glutamine-hydrolyzing].